The primary structure comprises 75 residues: UPF0352 protein VF_1649 (75 aa).

The protein belongs to the UPF0352 family.

This chain is UPF0352 protein VF_1649, found in Aliivibrio fischeri (strain ATCC 700601 / ES114) (Vibrio fischeri).